A 214-amino-acid chain; its full sequence is Putative pit accessory protein (214 aa).

This sequence belongs to the UPF0111 family.

Functionally, could be involved in orthophosphate transport. This Rhizobium meliloti (strain 1021) (Ensifer meliloti) protein is Putative pit accessory protein.